The chain runs to 70 residues: Small ribosomal subunit protein bS21C (70 aa).

Residues 38–70 (YEKPTTERKRKKAAAVARLRKQVRRSMPPKKKY) are disordered. The span at 45 to 70 (RKRKKAAAVARLRKQVRRSMPPKKKY) shows a compositional bias: basic residues.

Belongs to the bacterial ribosomal protein bS21 family.

The sequence is that of Small ribosomal subunit protein bS21C from Burkholderia thailandensis (strain ATCC 700388 / DSM 13276 / CCUG 48851 / CIP 106301 / E264).